The primary structure comprises 119 residues: Large ribosomal subunit protein P3z (119 aa).

Residues 79-90 (AGGAASSGGGAG) are compositionally biased toward gly residues. Positions 79-119 (AGGAASSGGGAGEAAAAPKEDEKKKEESEEEEGDFGFDLFG) are disordered. The span at 96-105 (PKEDEKKKEE) shows a compositional bias: basic and acidic residues.

This sequence belongs to the eukaryotic ribosomal protein P1/P2 family. In terms of processing, phosphorylated.

Plays an important role in the elongation step of protein synthesis. This chain is Large ribosomal subunit protein P3z (RPP3A), found in Arabidopsis thaliana (Mouse-ear cress).